Here is a 66-residue protein sequence, read N- to C-terminus: Ocellatin-PT5 (66 aa).

The signal sequence occupies residues 1 to 22 (MAFLKKSLFLVLFLGLVSLSIC). Positions 23-39 (DEEKRQDEDDDDDDDEE) are excised as a propeptide. At Val66 the chain carries Valine amide.

Expressed by the skin glands.

The protein localises to the secreted. Has antibacterial activity against Gram-negative bacterium E.coli ATCC 25922 (MIC=300 uM) but not against S.pneumoniae ATCC 700603, S.choleraesuis ATCC 14028 or Gram-positive bacterium S.aureus ATCC 29313. Shows very little hemolytic activity and no cytotoxicity. The polypeptide is Ocellatin-PT5 (Leptodactylus pustulatus (Ceara white-lipped frog)).